The following is a 765-amino-acid chain: E3 ubiquitin-protein ligase SlrP (765 aa).

The tract at residues 1 to 453 (MFNITNIQST…YQGPRVLFAM (453 aa)) is interaction with target proteins. 10 LRR repeats span residues 200–219 (QITT…ENLQ), 221–242 (NIKT…LPDT), 243–262 (IQEM…RLPS), 263–284 (ALQS…LPEE), 285–305 (LRYL…LPSE), 306–325 (ITHL…TLPP), 326–346 (GLKT…SLPP), 347–368 (ELQV…LPPT), 369–389 (ITTL…LPAA), and 390–410 (LQIM…LPHF). A linker region spans residues 454–461 (GDFSIVRV). Residues 462 to 765 (TRPLHQAVQG…VSSLMSAYWR (304 aa)) form an E3 ubiquitin-protein ligase catalytic domain region. An NEL domain is found at 464-758 (PLHQAVQGWL…NILLKKEVSS (295 aa)). Cys-546 functions as the Glycyl thioester intermediate in the catalytic mechanism.

This sequence belongs to the LRR-containing bacterial E3 ligase family. As to quaternary structure, interacts with host TXN. In terms of processing, ubiquitinated in the presence of host E1 ubiquitin-activating enzyme, E2 ubiquitin-conjugating enzyme and ubiquitin.

It is found in the secreted. The protein resides in the host cytoplasm. It catalyses the reaction S-ubiquitinyl-[E2 ubiquitin-conjugating enzyme]-L-cysteine + [acceptor protein]-L-lysine = [E2 ubiquitin-conjugating enzyme]-L-cysteine + N(6)-ubiquitinyl-[acceptor protein]-L-lysine.. In terms of biological role, effector proteins function to alter host cell physiology and promote bacterial survival in host tissues. This protein is an E3 ubiquitin ligase that interferes with host's ubiquitination pathway. Can ubiquitinate both ubiquitin and host TXN (thioredoxin). Leads to significant decrease of thioredoxin activity and increase of host cell death. The protein is E3 ubiquitin-protein ligase SlrP (slrP) of Salmonella typhimurium (strain 14028s / SGSC 2262).